A 76-amino-acid chain; its full sequence is Contulakin-G (76 aa).

Residues 1 to 22 form the signal peptide; sequence MQTAYWVMVMMMVWIAAPLSEG. Positions 23-50 are excised as a propeptide; the sequence is GKLNDVIRGLVPDDITPQLILGSLISRR. Pyrrolidone carboxylic acid is present on Gln51. A disordered region spans residues 51–76; sequence QSEEGGSNATKKPYILRASDQVASGP. Thr60 is a glycosylation site (O-linked (GalNAc...) threonine). Positions 67–76 are excised as a propeptide; it reads RASDQVASGP.

The protein belongs to the conotoxin C superfamily. O-glycosylated. The glycosylation seems to enhance the affinity to the neurotensin receptors. In terms of tissue distribution, expressed by the venom duct.

It localises to the secreted. In terms of biological role, acts as an agonist of neurotensin receptors. It binds to human neurotensin type 1 receptor (NTSR1), rat neurotensin types 1 and 2 receptors (NTSR1/NTSR2) and mouse neurotensin type 3 receptor (SORT1). The protein is Contulakin-G of Conus geographus (Geography cone).